The chain runs to 215 residues: Protein HP-25 homolog 2 (215 aa).

The signal sequence occupies residues 1 to 30; the sequence is MPGRGGQSLSMVCVDVWILALSVLSVMADA. The segment at 35 to 79 is disordered; the sequence is VTESCDSQGPPGLPGPPGLPGPPGPPGPPGPPGLRGPTGIPGDIE. A Collagen-like domain is found at 43–76; sequence GPPGLPGPPGLPGPPGPPGPPGPPGLRGPTGIPG. Pro residues predominate over residues 45–68; that stretch reads PGLPGPPGLPGPPGPPGPPGPPGL. The C1q domain occupies 82–215; that stretch reads LSPPKSAFAV…GYLLYGNYPG (134 aa).

It localises to the secreted. In Bos taurus (Bovine), this protein is Protein HP-25 homolog 2.